A 644-amino-acid chain; its full sequence is 1-deoxy-D-xylulose-5-phosphate synthase (644 aa).

Residues His-72 and 113–115 contribute to the thiamine diphosphate site; that span reads GHA. Position 144 (Asp-144) interacts with Mg(2+). Thiamine diphosphate contacts are provided by residues 145–146, Asn-174, Tyr-287, and Glu-370; that span reads GA. Residue Asn-174 coordinates Mg(2+).

It belongs to the transketolase family. DXPS subfamily. In terms of assembly, homodimer. Requires Mg(2+) as cofactor. It depends on thiamine diphosphate as a cofactor.

The catalysed reaction is D-glyceraldehyde 3-phosphate + pyruvate + H(+) = 1-deoxy-D-xylulose 5-phosphate + CO2. Its pathway is metabolic intermediate biosynthesis; 1-deoxy-D-xylulose 5-phosphate biosynthesis; 1-deoxy-D-xylulose 5-phosphate from D-glyceraldehyde 3-phosphate and pyruvate: step 1/1. In terms of biological role, catalyzes the acyloin condensation reaction between C atoms 2 and 3 of pyruvate and glyceraldehyde 3-phosphate to yield 1-deoxy-D-xylulose-5-phosphate (DXP). The chain is 1-deoxy-D-xylulose-5-phosphate synthase from Prochlorococcus marinus (strain MIT 9313).